The primary structure comprises 217 residues: Thiopurine S-methyltransferase (217 aa).

S-adenosyl-L-methionine is bound by residues W11, L46, E67, and R122.

Belongs to the class I-like SAM-binding methyltransferase superfamily. TPMT family.

It localises to the cytoplasm. The enzyme catalyses S-adenosyl-L-methionine + a thiopurine = S-adenosyl-L-homocysteine + a thiopurine S-methylether.. The chain is Thiopurine S-methyltransferase from Vibrio atlanticus (strain LGP32) (Vibrio splendidus (strain Mel32)).